Here is a 255-residue protein sequence, read N- to C-terminus: MASLSVPCVKICALNRRVGSLPGISTQRWQPQPNGISFPSDVSQNHSAFWRLRATTNEVVSNSTPMTNGGYMNGKAKTNVPEPAELSEFMAKVSGLLKLVDSKDIVELELKQLDCEIVIRKKEALQQAVPPAPVYHSMPPVMADFSMPPAQPVALPPSPTPTSTPATAKPTSAPSSSHPPLKSPMAGTFYRSPGPGEPPFVKVGDKVQKGQIVCIIEAMKLMNEIEAEKSGTIMELLAEDGKPVSVDTPLFVIAP.

A chloroplast-targeting transit peptide spans 1-87 (MASLSVPCVK…TNVPEPAELS (87 aa)). Residues 148–193 (PPAQPVALPPSPTPTSTPATAKPTSAPSSSHPPLKSPMAGTFYRSP) form a disordered region. Over residues 149–162 (PAQPVALPPSPTPT) the composition is skewed to pro residues. Low complexity predominate over residues 163 to 180 (STPATAKPTSAPSSSHPP). The region spanning 178–254 (HPPLKSPMAG…SVDTPLFVIA (77 aa)) is the Biotinyl-binding domain. Lysine 220 carries the post-translational modification N6-biotinyllysine.

Acetyl-CoA carboxylase is a heterohexamer composed of biotin carboxyl carrier protein, biotin carboxylase and 2 subunits each of ACCase subunit alpha and ACCase plastid-coded subunit beta (accD). As to expression, primarily expressed in 7 to 10 days after flowering seeds at levels approximately 2-fold less abundant than BCCP1.

It localises to the plastid. Its subcellular location is the chloroplast. It participates in lipid metabolism; fatty acid biosynthesis. Its function is as follows. This protein is a component of the acetyl coenzyme A carboxylase complex; first, biotin carboxylase catalyzes the carboxylation of the carrier protein and then the transcarboxylase transfers the carboxyl group to form malonyl-CoA. The protein is Biotin carboxyl carrier protein of acetyl-CoA carboxylase 2, chloroplastic (BCCP2) of Arabidopsis thaliana (Mouse-ear cress).